We begin with the raw amino-acid sequence, 37 residues long: MSDIN-like toxin proprotein 5 (37 aa).

Positions 1 to 10 are excised as a propeptide; that stretch reads MSDINATRLP. The segment at residues 11–20 is a cross-link (cyclopeptide (Leu-Pro)); it reads LFFPPDFRPP. Residues 21-37 constitute a propeptide that is removed on maturation; sequence CVGDADNFTLTRGENLC.

Belongs to the MSDIN fungal toxin family. In terms of processing, processed by the macrocyclase-peptidase enzyme POPB to yield a toxic cyclic decapeptide. POPB first removes 10 residues from the N-terminus. Conformational trapping of the remaining peptide forces the enzyme to release this intermediate rather than proceed to macrocyclization. The enzyme rebinds the remaining peptide in a different conformation and catalyzes macrocyclization of the N-terminal 10 residues. As to expression, expressed in basidiocarps.

Probable toxin that belongs to the MSDIN-like toxin family responsible for a large number of food poisoning cases and deaths. This is MSDIN-like toxin proprotein 5 from Amanita exitialis (Guangzhou destroying angel).